The sequence spans 588 residues: Protein kintoun (588 aa).

Disordered regions lie at residues 199–223 (PGYE…PENS), 338–498 (PPLE…SSQE), and 510–535 (AANV…ADED). The segment covering 202 to 212 (EAKEPPEERDL) has biased composition (basic and acidic residues). Positions 350–361 (PNPTSDPQNENQ) are enriched in polar residues. Composition is skewed to basic and acidic residues over residues 362 to 382 (TRVE…HQRG) and 393 to 433 (QVLE…KFEL). Over residues 435–447 (DVQQENKGNCSNT) the composition is skewed to polar residues. Basic and acidic residues predominate over residues 448 to 460 (KEVKCCRRTKDSL).

The protein belongs to the PIH1 family. Kintoun subfamily.

Its subcellular location is the cytoplasm. The protein localises to the dynein axonemal particle. Its function is as follows. Required for cytoplasmic pre-assembly of axonemal dyneins, thereby playing a central role in motility in cilia and flagella. Involved in pre-assembly of dynein arm complexes in the cytoplasm before intraflagellar transport loads them for the ciliary compartment. The chain is Protein kintoun from Oryzias latipes (Japanese rice fish).